We begin with the raw amino-acid sequence, 180 residues long: Shikimate kinase (180 aa).

19–24 (GAGKTT) is an ATP binding site. Threonine 23 contacts Mg(2+). Substrate contacts are provided by aspartate 41, arginine 65, and glycine 87. ATP is bound at residue arginine 125. Arginine 144 is a binding site for substrate.

This sequence belongs to the shikimate kinase family. In terms of assembly, monomer. Mg(2+) is required as a cofactor.

The protein resides in the cytoplasm. It carries out the reaction shikimate + ATP = 3-phosphoshikimate + ADP + H(+). It functions in the pathway metabolic intermediate biosynthesis; chorismate biosynthesis; chorismate from D-erythrose 4-phosphate and phosphoenolpyruvate: step 5/7. Its function is as follows. Catalyzes the specific phosphorylation of the 3-hydroxyl group of shikimic acid using ATP as a cosubstrate. This Acinetobacter baylyi (strain ATCC 33305 / BD413 / ADP1) protein is Shikimate kinase.